The primary structure comprises 400 residues: Acyl-CoA dehydrogenase FadE26 (400 aa).

Residues Ile-127–Ser-130, Thr-136, and Ser-162 contribute to the FAD site. The Proton acceptor role is filled by Glu-247. Thr-380–Glu-382 provides a ligand contact to FAD.

The protein belongs to the acyl-CoA dehydrogenase family. As to quaternary structure, heterotetramer (dimer of heterodimers) composed of FadE26 and FadE27. Requires FAD as cofactor.

It carries out the reaction (25S)-3-oxocholest-4-en-26-oyl-CoA + A = 3-oxo-cholest-4,24-dien-26-oyl-CoA + AH2. The protein operates within steroid metabolism; cholesterol degradation. Its activity is regulated as follows. Uncompetitively inhibited by high concentration of 3-OCS-CoA. Involved in the first cycle of side chain dehydrogenation in the beta-oxidation of cholesterol catabolism. It contributes partly to the virulence by increasing the efficiency of beta-oxidation. Catalyzes the dehydrogenation of acyl-CoA ester side chains of (25S)-3-oxo-cholest-4-en-26-oyl-CoA (3-OCS-CoA) to yield (24E)-3-oxo-cholest-4,24-dien-26-oyl-CoA. Also able to dehydrogenate steroyl-CoA such as 3-oxo-chol-4-en-24-oyl-CoA (3-OCO-CoA) as well as 3-oxo-4-pregnene-20-carboxyl-CoA (3-OPC-CoA). It dehydrogenates only (25S)-OCS-CoA diastereomer. This is Acyl-CoA dehydrogenase FadE26 (fadE26) from Mycobacterium tuberculosis (strain ATCC 25618 / H37Rv).